The chain runs to 87 residues: Acylphosphatase (87 aa).

Residues 1–87 (MAWVHGRVQG…EDYQDFRIRY (87 aa)) form the Acylphosphatase-like domain. Residues Arg-14 and Asn-32 contribute to the active site.

This sequence belongs to the acylphosphatase family.

The enzyme catalyses an acyl phosphate + H2O = a carboxylate + phosphate + H(+). The chain is Acylphosphatase (acyP) from Cronobacter sakazakii (strain ATCC BAA-894) (Enterobacter sakazakii).